We begin with the raw amino-acid sequence, 354 residues long: Small ribosomal subunit biogenesis GTPase RsgA 1 (354 aa).

The segment covering 1-24 (MAKKKKLTKGQVRRVRSNQQKRLK) has biased composition (basic residues). A disordered region spans residues 1–28 (MAKKKKLTKGQVRRVRSNQQKRLKKQEE). Positions 113-274 (YDGLKPVAAN…LIDSPGVREF (162 aa)) constitute a CP-type G domain. Residues 160 to 163 (NKVD) and 214 to 222 (GQSGVGKSS) contribute to the GTP site. Zn(2+) contacts are provided by Cys298, Cys303, His305, and Cys311.

This sequence belongs to the TRAFAC class YlqF/YawG GTPase family. RsgA subfamily. Monomer. Associates with 30S ribosomal subunit, binds 16S rRNA. Zn(2+) is required as a cofactor.

The protein localises to the cytoplasm. Its function is as follows. One of several proteins that assist in the late maturation steps of the functional core of the 30S ribosomal subunit. Helps release RbfA from mature subunits. May play a role in the assembly of ribosomal proteins into the subunit. Circularly permuted GTPase that catalyzes slow GTP hydrolysis, GTPase activity is stimulated by the 30S ribosomal subunit. The chain is Small ribosomal subunit biogenesis GTPase RsgA 1 from Vibrio parahaemolyticus serotype O3:K6 (strain RIMD 2210633).